The chain runs to 338 residues: DNA-directed RNA polymerase subunit alpha (338 aa).

Residues 1 to 225 (MLISQRPTIT…ELFGLARELN (225 aa)) form an alpha N-terminal domain (alpha-NTD) region. The tract at residues 242–338 (YIAAYSMPIE…YIDVEAEDSE (97 aa)) is alpha C-terminal domain (alpha-CTD). A disordered region spans residues 319-338 (LEGYDAETGGYIDVEAEDSE).

It belongs to the RNA polymerase alpha chain family. In terms of assembly, homodimer. The RNAP catalytic core consists of 2 alpha, 1 beta, 1 beta' and 1 omega subunit. When a sigma factor is associated with the core the holoenzyme is formed, which can initiate transcription.

It carries out the reaction RNA(n) + a ribonucleoside 5'-triphosphate = RNA(n+1) + diphosphate. In terms of biological role, DNA-dependent RNA polymerase catalyzes the transcription of DNA into RNA using the four ribonucleoside triphosphates as substrates. This is DNA-directed RNA polymerase subunit alpha from Corynebacterium glutamicum (strain ATCC 13032 / DSM 20300 / JCM 1318 / BCRC 11384 / CCUG 27702 / LMG 3730 / NBRC 12168 / NCIMB 10025 / NRRL B-2784 / 534).